A 598-amino-acid chain; its full sequence is Terpenoid synthase 1 (598 aa).

Mg(2+) is bound by residues aspartate 362, aspartate 366, asparagine 494, and aspartate 502. The DDXXD motif signature appears at 362–366 (DDTCD).

The protein belongs to the terpene synthase family. Tpsa subfamily. The cofactor is Mg(2+). Mn(2+) serves as cofactor. As to expression, expressed exclusively in siliques.

The protein localises to the cytoplasm. The protein operates within secondary metabolite biosynthesis; terpenoid biosynthesis. The sequence is that of Terpenoid synthase 1 (TPS01) from Arabidopsis thaliana (Mouse-ear cress).